We begin with the raw amino-acid sequence, 680 residues long: HEAT repeat-containing protein 3 (680 aa).

A compositionally biased stretch (basic residues) spans 1–11 (MGKSRTKRFKR). The tract at residues 1–39 (MGKSRTKRFKRPQFSPTGDCQAEAAAAANGTGGEEDDGP) is disordered. The residue at position 15 (Ser15) is a Phosphoserine. Residues 18–29 (GDCQAEAAAAAN) show a composition bias toward low complexity. 2 HEAT repeats span residues 38-69 (GPAA…VQQR) and 74-110 (GLAR…SACG). Residue Ser144 is modified to Phosphoserine. Thr340 is subject to Phosphothreonine.

It belongs to the nuclear import and ribosome assembly adapter family. Component of a hexameric 5S RNP precursor complex, composed of 5S RNA, RRS1, RPF2/BXDC1, RPL5, RPL11 and HEATR3; this complex acts as a precursor for ribosome assembly.

In terms of biological role, plays a role in ribosome biogenesis and in nuclear import of the 60S ribosomal protein L5/large ribosomal subunit protein uL18 (RPL5). Required for proper erythrocyte maturation. This Homo sapiens (Human) protein is HEAT repeat-containing protein 3 (HEATR3).